Consider the following 104-residue polypeptide: Urease subunit beta (104 aa).

The protein belongs to the urease beta subunit family. In terms of assembly, heterotrimer of UreA (gamma), UreB (beta) and UreC (alpha) subunits. Three heterotrimers associate to form the active enzyme.

It is found in the cytoplasm. The enzyme catalyses urea + 2 H2O + H(+) = hydrogencarbonate + 2 NH4(+). Its pathway is nitrogen metabolism; urea degradation; CO(2) and NH(3) from urea (urease route): step 1/1. This Rhodopseudomonas palustris (strain BisB5) protein is Urease subunit beta.